A 285-amino-acid chain; its full sequence is Urease accessory protein UreD (285 aa).

Belongs to the UreD family. As to quaternary structure, ureD, UreF and UreG form a complex that acts as a GTP-hydrolysis-dependent molecular chaperone, activating the urease apoprotein by helping to assemble the nickel containing metallocenter of UreC. The UreE protein probably delivers the nickel.

Its subcellular location is the cytoplasm. Functionally, required for maturation of urease via the functional incorporation of the urease nickel metallocenter. This Cytophaga hutchinsonii (strain ATCC 33406 / DSM 1761 / CIP 103989 / NBRC 15051 / NCIMB 9469 / D465) protein is Urease accessory protein UreD.